The following is a 337-amino-acid chain: DNA-directed RNA polymerase subunit alpha (337 aa).

The segment at 1–233 is alpha N-terminal domain (alpha-NTD); the sequence is MVREDVVGST…DLLIPFLHAE (233 aa). Residues 265–337 form an alpha C-terminal domain (alpha-CTD) region; sequence KGIPLTCIFI…FAINLLNKKL (73 aa).

Belongs to the RNA polymerase alpha chain family. In terms of assembly, in plastids the minimal PEP RNA polymerase catalytic core is composed of four subunits: alpha, beta, beta', and beta''. When a (nuclear-encoded) sigma factor is associated with the core the holoenzyme is formed, which can initiate transcription.

The protein localises to the plastid. The protein resides in the chloroplast. It carries out the reaction RNA(n) + a ribonucleoside 5'-triphosphate = RNA(n+1) + diphosphate. Its function is as follows. DNA-dependent RNA polymerase catalyzes the transcription of DNA into RNA using the four ribonucleoside triphosphates as substrates. This chain is DNA-directed RNA polymerase subunit alpha, found in Phalaenopsis aphrodite subsp. formosana (Moth orchid).